The primary structure comprises 310 residues: 4-hydroxy-3-methylbut-2-enyl diphosphate reductase (310 aa).

Cys12 serves as a coordination point for [4Fe-4S] cluster. (2E)-4-hydroxy-3-methylbut-2-enyl diphosphate-binding residues include His41 and His74. Residues His41 and His74 each contribute to the dimethylallyl diphosphate site. His41 and His74 together coordinate isopentenyl diphosphate. A [4Fe-4S] cluster-binding site is contributed by Cys96. His124 contributes to the (2E)-4-hydroxy-3-methylbut-2-enyl diphosphate binding site. His124 contributes to the dimethylallyl diphosphate binding site. Position 124 (His124) interacts with isopentenyl diphosphate. Glu126 serves as the catalytic Proton donor. (2E)-4-hydroxy-3-methylbut-2-enyl diphosphate is bound at residue Thr167. Position 197 (Cys197) interacts with [4Fe-4S] cluster. (2E)-4-hydroxy-3-methylbut-2-enyl diphosphate-binding residues include Ser225, Ser226, Asn227, and Ser269. Dimethylallyl diphosphate is bound by residues Ser225, Ser226, Asn227, and Ser269. Isopentenyl diphosphate contacts are provided by Ser225, Ser226, Asn227, and Ser269.

This sequence belongs to the IspH family. [4Fe-4S] cluster is required as a cofactor.

It carries out the reaction isopentenyl diphosphate + 2 oxidized [2Fe-2S]-[ferredoxin] + H2O = (2E)-4-hydroxy-3-methylbut-2-enyl diphosphate + 2 reduced [2Fe-2S]-[ferredoxin] + 2 H(+). The catalysed reaction is dimethylallyl diphosphate + 2 oxidized [2Fe-2S]-[ferredoxin] + H2O = (2E)-4-hydroxy-3-methylbut-2-enyl diphosphate + 2 reduced [2Fe-2S]-[ferredoxin] + 2 H(+). The protein operates within isoprenoid biosynthesis; dimethylallyl diphosphate biosynthesis; dimethylallyl diphosphate from (2E)-4-hydroxy-3-methylbutenyl diphosphate: step 1/1. It functions in the pathway isoprenoid biosynthesis; isopentenyl diphosphate biosynthesis via DXP pathway; isopentenyl diphosphate from 1-deoxy-D-xylulose 5-phosphate: step 6/6. Its function is as follows. Catalyzes the conversion of 1-hydroxy-2-methyl-2-(E)-butenyl 4-diphosphate (HMBPP) into a mixture of isopentenyl diphosphate (IPP) and dimethylallyl diphosphate (DMAPP). Acts in the terminal step of the DOXP/MEP pathway for isoprenoid precursor biosynthesis. This is 4-hydroxy-3-methylbut-2-enyl diphosphate reductase from Tolumonas auensis (strain DSM 9187 / NBRC 110442 / TA 4).